A 309-amino-acid chain; its full sequence is DnaJ homolog subfamily B member 7 (309 aa).

Positions 3 to 69 (DYYEVLGLQR…EKRDIYDKYG (67 aa)) constitute a J domain. A disordered region spans residues 282-309 (FSAGVKEGGKRKKKKRKEVQKKSTKRNC). The segment covering 290 to 309 (GKRKKKKRKEVQKKSTKRNC) has biased composition (basic residues).

Its function is as follows. Probably acts as a co-chaperone. This is DnaJ homolog subfamily B member 7 (DNAJB7) from Homo sapiens (Human).